The sequence spans 96 residues: Invertase 7 (96 aa).

The first 19 residues, 1–19 (MLLQAFIFLLAGFAAKISA), serve as a signal peptide directing secretion. The N-linked (GlcNAc...) asparagine glycan is linked to N23. Substrate contacts are provided by residues 39 to 42 (WMND) and Q60. Residue D42 is part of the active site. N64 and N76 each carry an N-linked (GlcNAc...) asparagine glycan.

This sequence belongs to the glycosyl hydrolase 32 family.

The catalysed reaction is Hydrolysis of terminal non-reducing beta-D-fructofuranoside residues in beta-D-fructofuranosides.. The sequence is that of Invertase 7 (SUC7) from Saccharomyces cerevisiae (Baker's yeast).